The following is a 299-amino-acid chain: Large ribosomal subunit protein eL22 (299 aa).

Disordered regions lie at residues 1–142 and 155–178; these read MAPT…AAPA and VAKP…KKNV. 2 stretches are compositionally biased toward basic and acidic residues: residues 33–42 and 55–64; these read GKVEKPKAEA and KASEAAKDVK. Composition is skewed to low complexity over residues 65-98 and 105-142; these read AAAA…AAAA and AAAA…AAPA.

The protein belongs to the eukaryotic ribosomal protein eL22 family.

This chain is Large ribosomal subunit protein eL22 (RpL22), found in Drosophila melanogaster (Fruit fly).